Here is a 219-residue protein sequence, read N- to C-terminus: ATP-dependent Clp protease proteolytic subunit (219 aa).

Serine 101 acts as the Nucleophile in catalysis. The active site involves histidine 126.

The protein belongs to the peptidase S14 family. In terms of assembly, component of the chloroplastic Clp protease core complex.

The protein resides in the plastid. Its subcellular location is the chloroplast stroma. It catalyses the reaction Hydrolysis of proteins to small peptides in the presence of ATP and magnesium. alpha-casein is the usual test substrate. In the absence of ATP, only oligopeptides shorter than five residues are hydrolyzed (such as succinyl-Leu-Tyr-|-NHMec, and Leu-Tyr-Leu-|-Tyr-Trp, in which cleavage of the -Tyr-|-Leu- and -Tyr-|-Trp bonds also occurs).. Its function is as follows. Cleaves peptides in various proteins in a process that requires ATP hydrolysis. Has a chymotrypsin-like activity. Plays a major role in the degradation of misfolded proteins. This is ATP-dependent Clp protease proteolytic subunit from Chara vulgaris (Common stonewort).